Reading from the N-terminus, the 421-residue chain is Serine--tRNA ligase (421 aa).

An L-serine-binding site is contributed by 230 to 232; the sequence is TAE. 259-261 contacts ATP; it reads RRE. Position 282 (Glu282) interacts with L-serine. 346-349 lines the ATP pocket; it reads EISS. Residue Ser380 coordinates L-serine.

Belongs to the class-II aminoacyl-tRNA synthetase family. Type-1 seryl-tRNA synthetase subfamily. As to quaternary structure, homodimer. The tRNA molecule binds across the dimer.

It is found in the cytoplasm. The enzyme catalyses tRNA(Ser) + L-serine + ATP = L-seryl-tRNA(Ser) + AMP + diphosphate + H(+). It carries out the reaction tRNA(Sec) + L-serine + ATP = L-seryl-tRNA(Sec) + AMP + diphosphate + H(+). Its pathway is aminoacyl-tRNA biosynthesis; selenocysteinyl-tRNA(Sec) biosynthesis; L-seryl-tRNA(Sec) from L-serine and tRNA(Sec): step 1/1. Functionally, catalyzes the attachment of serine to tRNA(Ser). Is also able to aminoacylate tRNA(Sec) with serine, to form the misacylated tRNA L-seryl-tRNA(Sec), which will be further converted into selenocysteinyl-tRNA(Sec). The chain is Serine--tRNA ligase from Methanosarcina acetivorans (strain ATCC 35395 / DSM 2834 / JCM 12185 / C2A).